Reading from the N-terminus, the 197-residue chain is Imidazoleglycerol-phosphate dehydratase (197 aa).

It belongs to the imidazoleglycerol-phosphate dehydratase family.

It localises to the cytoplasm. The enzyme catalyses D-erythro-1-(imidazol-4-yl)glycerol 3-phosphate = 3-(imidazol-4-yl)-2-oxopropyl phosphate + H2O. It functions in the pathway amino-acid biosynthesis; L-histidine biosynthesis; L-histidine from 5-phospho-alpha-D-ribose 1-diphosphate: step 6/9. In Pseudomonas putida (strain GB-1), this protein is Imidazoleglycerol-phosphate dehydratase.